A 292-amino-acid polypeptide reads, in one-letter code: Probable 2-(5''-triphosphoribosyl)-3'-dephosphocoenzyme-A synthase (292 aa).

This sequence belongs to the CitG/MdcB family.

It carries out the reaction 3'-dephospho-CoA + ATP = 2'-(5''-triphospho-alpha-D-ribosyl)-3'-dephospho-CoA + adenine. The chain is Probable 2-(5''-triphosphoribosyl)-3'-dephosphocoenzyme-A synthase from Shigella flexneri serotype 5b (strain 8401).